The chain runs to 272 residues: Hydroxyethylthiazole kinase (272 aa).

Met44 contributes to the substrate binding site. The ATP site is built by Lys119 and Thr172. Position 199 (Gly199) interacts with substrate.

It belongs to the Thz kinase family. Requires Mg(2+) as cofactor.

It carries out the reaction 5-(2-hydroxyethyl)-4-methylthiazole + ATP = 4-methyl-5-(2-phosphooxyethyl)-thiazole + ADP + H(+). It participates in cofactor biosynthesis; thiamine diphosphate biosynthesis; 4-methyl-5-(2-phosphoethyl)-thiazole from 5-(2-hydroxyethyl)-4-methylthiazole: step 1/1. Its function is as follows. Catalyzes the phosphorylation of the hydroxyl group of 4-methyl-5-beta-hydroxyethylthiazole (THZ). The sequence is that of Hydroxyethylthiazole kinase from Enterococcus faecalis (strain ATCC 700802 / V583).